Here is a 1485-residue protein sequence, read N- to C-terminus: Sex-determining transformer protein 2 (1485 aa).

The signal sequence occupies residues 1-28; it reads MSLRSNKLLVAAVIFTVVTFGLLLTSSI. The next 9 membrane-spanning stretches (helical) occupy residues 438-458, 490-510, 584-604, 732-752, 923-943, 950-970, 980-1000, 1033-1053, and 1063-1083; these read VVYF…FFAW, IELN…NTYL, WPFI…FVDI, GILL…VMLI, LLAS…FSIT, LIFS…ISLF, DSAV…LSLF, AQVF…AGVV, and TVIL…VLVA. An interaction with fem-3 region spans residues 1131–1271; the sequence is DFHIRPTNMS…MLHMIEKVQK (141 aa). The disordered stretch occupies residues 1143–1175; that stretch reads YAPPPAKKRAKQTNNETDPEKKEDEPGTSNANN. Residues 1181–1201 traverse the membrane as a helical segment; that stretch reads AAHRLAILPWHFVLGGIPVDL. Disordered regions lie at residues 1228–1252, 1275–1306, and 1348–1384; these read SELE…PAPE, EKEA…PSHR, and EMPP…PPHP. A compositionally biased stretch (basic and acidic residues) spans 1275 to 1284; the sequence is EKEAKEKVHQ. The interval 1401-1422 is MX regulatory domain; required for tra-1 binding; the sequence is CEDVYWTYNDGRLPPNVAMPPR. The disordered stretch occupies residues 1442–1485; it reads PPGQPSIPIPAEAMALREERARAHREQEQRDNSQSPSPSPEPGL. Residues 1456-1472 are compositionally biased toward basic and acidic residues; it reads ALREERARAHREQEQRD.

As to quaternary structure, interacts with tra-1 and fem-3. As to expression, somatic and germline tissues.

The protein resides in the membrane. Plays a major role in controlling sexual cell fates. Promotes female development in XX animals where it sequesters one or more of the FEM proteins to the membrane thereby freeing the tra-1 protein (a putative transcription factor) to enter the nucleus and promote female development. In XO animals it acts as a receptor for her-1 which prevents it from binding to FEM proteins thereby repressing the activity of tra-1. Negatively regulates male development when bound to fem-3 and is required together with tra-1 for promoting spermatogenesis. The polypeptide is Sex-determining transformer protein 2 (Caenorhabditis remanei (Caenorhabditis vulgaris)).